The primary structure comprises 245 residues: Pyridoxine 5'-phosphate synthase (245 aa).

Position 7 (asparagine 7) interacts with 3-amino-2-oxopropyl phosphate. 9-10 (DH) contacts 1-deoxy-D-xylulose 5-phosphate. Residue arginine 18 participates in 3-amino-2-oxopropyl phosphate binding. Catalysis depends on histidine 43, which acts as the Proton acceptor. 1-deoxy-D-xylulose 5-phosphate-binding residues include arginine 45 and histidine 50. The Proton acceptor role is filled by glutamate 70. A 1-deoxy-D-xylulose 5-phosphate-binding site is contributed by threonine 100. Histidine 190 acts as the Proton donor in catalysis. Residues glycine 191 and 212-213 (GH) each bind 3-amino-2-oxopropyl phosphate.

Belongs to the PNP synthase family. In terms of assembly, homooctamer; tetramer of dimers.

Its subcellular location is the cytoplasm. The catalysed reaction is 3-amino-2-oxopropyl phosphate + 1-deoxy-D-xylulose 5-phosphate = pyridoxine 5'-phosphate + phosphate + 2 H2O + H(+). Its pathway is cofactor biosynthesis; pyridoxine 5'-phosphate biosynthesis; pyridoxine 5'-phosphate from D-erythrose 4-phosphate: step 5/5. Catalyzes the complicated ring closure reaction between the two acyclic compounds 1-deoxy-D-xylulose-5-phosphate (DXP) and 3-amino-2-oxopropyl phosphate (1-amino-acetone-3-phosphate or AAP) to form pyridoxine 5'-phosphate (PNP) and inorganic phosphate. The protein is Pyridoxine 5'-phosphate synthase of Prochlorococcus marinus (strain MIT 9313).